Consider the following 461-residue polypeptide: UDP-glucosyltransferase 1 (461 aa).

It belongs to the UDP-glycosyltransferase family.

Its pathway is secondary metabolite biosynthesis. Functionally, UDP-glucosyltransferase; part of the pathway that mediates the biosynthesis of tenellin-type 2-pyridones, iron-chelating compounds involved in iron stress tolerance, competition with the natural competitor fungus Metarhizium robertsii and insect hosts infection. Targets the N-OH hydroxyl residue of 15-hydroxytellenin (15-HT) to produce pyridovericin-N-O-(beta-D-glucopyranoside) which is further methylated by the methyltransferase MT1 to yield pyridovericin-N-O-(4-O-methyl-beta-D-glucopyranoside) (PMGP). The pathway begins with the assembly of the polyketide-amino acid backbone by the hybrid PKS-NRPS tenS with the help of the enoyl reductase tenC. These enzymes catalyze the synthesis of the pyrrolidine-2-dione intermediates pretellinin A, 11-hydropretellenin A, 12-hydropretellenin A, 13-hydropretellenin A, 14-hydropretellenin A, 12-oxopretellenin A and prototellinin D. The cytochrome P450 monooxygenase tenA then catalyzes an oxidative ring expansion of pretenellin A and 14-hydropretellenin A to form the 2-pyridone core, leading to pretenellin B and pyridovericin, respectively. The cytochrome P450 monooxygenase tenB is then required for the selective N-hydroxylation of the 2-pyridone nitrogen of yield tellinin and 15-hydroxytellenin (15-HT), respectively. The UDP-glucosyltransferase GT1 and the methyltransferase MT1, located outside the tenS gene cluster, contribute to the stepwise glycosylation and methylation of 15-HT to obtain the glycoside pyridovericin-N-O-(4-O-methyl-beta-D-glucopyranoside) (PMGP). Additional related compounds such as 1-O-methyl-15-HT, (8Z)-1-O-methyl-15-HT, and O-methyltenellin A are also produced but the enzymes involved in their biosynthesis have still to be determined. The sequence is that of UDP-glucosyltransferase 1 from Beauveria bassiana (strain ARSEF 2860) (White muscardine disease fungus).